The sequence spans 73 residues: Putative membrane protein insertion efficiency factor (73 aa).

The protein belongs to the UPF0161 family.

The protein resides in the cell inner membrane. Its function is as follows. Could be involved in insertion of integral membrane proteins into the membrane. The protein is Putative membrane protein insertion efficiency factor of Bacteroides fragilis (strain ATCC 25285 / DSM 2151 / CCUG 4856 / JCM 11019 / LMG 10263 / NCTC 9343 / Onslow / VPI 2553 / EN-2).